The chain runs to 176 residues: Late lactation protein (176 aa).

A signal peptide spans 1–18 (MKVLFFTIALSLFSILHA). Cysteines 78 and 171 form a disulfide.

This sequence belongs to the calycin superfamily. Lipocalin family. Mammary gland. Secreted in milk.

The protein localises to the secreted. In terms of biological role, probably serves a role in the transport of a small ligand released during the hydrolysis of milk fat. The sequence is that of Late lactation protein from Trichosurus vulpecula (Brush-tailed possum).